The following is a 460-amino-acid chain: Fumarate hydratase class II (460 aa).

Substrate is bound by residues 95 to 97 (SGT), 126 to 129 (HPND), 136 to 138 (SSN), and Thr-184. His-185 functions as the Proton donor/acceptor in the catalytic mechanism. The active site involves Ser-315. Substrate contacts are provided by residues Ser-316 and 321–323 (KIN).

Belongs to the class-II fumarase/aspartase family. Fumarase subfamily. As to quaternary structure, homotetramer.

Its subcellular location is the cytoplasm. It carries out the reaction (S)-malate = fumarate + H2O. Its pathway is carbohydrate metabolism; tricarboxylic acid cycle; (S)-malate from fumarate: step 1/1. Its function is as follows. Involved in the TCA cycle. Catalyzes the stereospecific interconversion of fumarate to L-malate. This is Fumarate hydratase class II from Chlamydia caviae (strain ATCC VR-813 / DSM 19441 / 03DC25 / GPIC) (Chlamydophila caviae).